The sequence spans 326 residues: Glutaminase 2 (326 aa).

Residues serine 73, asparagine 125, glutamate 169, asparagine 176, tyrosine 200, tyrosine 252, and valine 270 each contribute to the substrate site.

This sequence belongs to the glutaminase family. Homotetramer.

The enzyme catalyses L-glutamine + H2O = L-glutamate + NH4(+). This is Glutaminase 2 from Bacillus cereus (strain ATCC 14579 / DSM 31 / CCUG 7414 / JCM 2152 / NBRC 15305 / NCIMB 9373 / NCTC 2599 / NRRL B-3711).